The following is a 114-amino-acid chain: Aspartate 1-decarboxylase (114 aa).

The active-site Schiff-base intermediate with substrate; via pyruvic acid is the Ser25. Ser25 carries the pyruvic acid (Ser) modification. Thr57 contacts substrate. Residue Tyr58 is the Proton donor of the active site. Residue 73–75 coordinates substrate; that stretch reads GAA.

The protein belongs to the PanD family. As to quaternary structure, heterooctamer of four alpha and four beta subunits. Requires pyruvate as cofactor. In terms of processing, is synthesized initially as an inactive proenzyme, which is activated by self-cleavage at a specific serine bond to produce a beta-subunit with a hydroxyl group at its C-terminus and an alpha-subunit with a pyruvoyl group at its N-terminus.

It localises to the cytoplasm. The catalysed reaction is L-aspartate + H(+) = beta-alanine + CO2. The protein operates within cofactor biosynthesis; (R)-pantothenate biosynthesis; beta-alanine from L-aspartate: step 1/1. Functionally, catalyzes the pyruvoyl-dependent decarboxylation of aspartate to produce beta-alanine. The sequence is that of Aspartate 1-decarboxylase from Thermotoga sp. (strain RQ2).